Consider the following 69-residue polypeptide: Sec-independent protein translocase protein TatA (69 aa).

Residues 1–21 (MMPGPFELIIILVIVLLLFGG) traverse the membrane as a helical segment.

It belongs to the TatA/E family. As to quaternary structure, the Tat system comprises two distinct complexes: a TatABC complex, containing multiple copies of TatA, TatB and TatC subunits, and a separate TatA complex, containing only TatA subunits. Substrates initially bind to the TatABC complex, which probably triggers association of the separate TatA complex to form the active translocon.

It is found in the cell inner membrane. In terms of biological role, part of the twin-arginine translocation (Tat) system that transports large folded proteins containing a characteristic twin-arginine motif in their signal peptide across membranes. TatA could form the protein-conducting channel of the Tat system. The protein is Sec-independent protein translocase protein TatA of Vesicomyosocius okutanii subsp. Calyptogena okutanii (strain HA).